A 254-amino-acid polypeptide reads, in one-letter code: tRNA pseudouridine synthase A (254 aa).

The active-site Nucleophile is the Asp-52. Tyr-111 provides a ligand contact to substrate.

This sequence belongs to the tRNA pseudouridine synthase TruA family. In terms of assembly, homodimer.

The enzyme catalyses uridine(38/39/40) in tRNA = pseudouridine(38/39/40) in tRNA. In terms of biological role, formation of pseudouridine at positions 38, 39 and 40 in the anticodon stem and loop of transfer RNAs. The polypeptide is tRNA pseudouridine synthase A (Methylobacterium nodulans (strain LMG 21967 / CNCM I-2342 / ORS 2060)).